Reading from the N-terminus, the 276-residue chain is Ice-binding protein (276 aa).

A signal peptide spans 1–24 (MKILKRIPVLAVLLVGLMTNCSND). The Ice-binding site motif (T-A/G-X-T/N) 1 motif lies at 79 to 82 (TGIT). An intrachain disulfide couples cysteine 107 to cysteine 124. Short sequence motifs (ice-binding site motif (T-A/G-X-T/N)) lie at residues 245–248 (TGIN) and 263–266 (TAVT).

This sequence belongs to the ice-binding protein family. As to quaternary structure, monomer.

It is found in the secreted. In terms of biological role, has antifreeze activity for survival in a subzero environment. Binds to the surface of ice crystals and inhibits their growth. Has high thermal hysteresis (TH) activity, which is the ability to lower the freezing point of an aqueous solution below its melting point, and thus the freezing of the cell fluid can be prevented protecting the organism from ice damage. The TH activity of this protein is 2.2 degrees Celsius at 5 uM and 2.5 degrees Celsius at 50 uM. This Flavobacterium frigoris (strain PS1) protein is Ice-binding protein.